A 525-amino-acid chain; its full sequence is GMP synthase [glutamine-hydrolyzing] (525 aa).

The 190-residue stretch at 13 to 202 (TILVLDFGSQ…AVDLCHAKQN (190 aa)) folds into the Glutamine amidotransferase type-1 domain. Cysteine 89 (nucleophile) is an active-site residue. Catalysis depends on residues histidine 176 and glutamate 178. Residues 203–400 (WTMENFIDTE…LGIPHDLVWR (198 aa)) enclose the GMPS ATP-PPase domain. 231–237 (SGGVDST) is an ATP binding site. Lysine 241 participates in a covalent cross-link: Glycyl lysine isopeptide (Lys-Gly) (interchain with G-Cter in ubiquitin). Arginine 304 provides a ligand contact to XMP. Lysine 426 participates in a covalent cross-link: Glycyl lysine isopeptide (Lys-Gly) (interchain with G-Cter in ubiquitin). Residues aspartate 462, lysine 517, and glutamate 523 each contribute to the XMP site.

In terms of assembly, homodimer. Requires Mg(2+) as cofactor.

The protein resides in the cytoplasm. The protein localises to the cytosol. The enzyme catalyses XMP + L-glutamine + ATP + H2O = GMP + L-glutamate + AMP + diphosphate + 2 H(+). It participates in purine metabolism; GMP biosynthesis; GMP from XMP (L-Gln route): step 1/1. Catalyzes the conversion of xanthine monophosphate (XMP) to GMP in the presence of glutamine and ATP through an adenyl-XMP intermediate. The protein is GMP synthase [glutamine-hydrolyzing] of Saccharomyces cerevisiae (strain ATCC 204508 / S288c) (Baker's yeast).